Here is a 245-residue protein sequence, read N- to C-terminus: 1-(5-phosphoribosyl)-5-[(5-phosphoribosylamino)methylideneamino] imidazole-4-carboxamide isomerase (245 aa).

Residue aspartate 7 is the Proton acceptor of the active site. Aspartate 129 serves as the catalytic Proton donor.

It belongs to the HisA/HisF family.

It is found in the cytoplasm. The catalysed reaction is 1-(5-phospho-beta-D-ribosyl)-5-[(5-phospho-beta-D-ribosylamino)methylideneamino]imidazole-4-carboxamide = 5-[(5-phospho-1-deoxy-D-ribulos-1-ylimino)methylamino]-1-(5-phospho-beta-D-ribosyl)imidazole-4-carboxamide. The protein operates within amino-acid biosynthesis; L-histidine biosynthesis; L-histidine from 5-phospho-alpha-D-ribose 1-diphosphate: step 4/9. This chain is 1-(5-phosphoribosyl)-5-[(5-phosphoribosylamino)methylideneamino] imidazole-4-carboxamide isomerase, found in Escherichia coli O17:K52:H18 (strain UMN026 / ExPEC).